The chain runs to 418 residues: Actin-related protein 3-B (418 aa).

Belongs to the actin family. ARP3 subfamily. Component of the Arp2/3 complex composed of actr2/arp2, actr3/arp3, arpc1 (arpc1a or arpc1b), arpc2, arpc3, arpc4 and arpc5.

The protein resides in the cytoplasm. It is found in the cytoskeleton. It localises to the cell projection. The protein localises to the nucleus. Its function is as follows. ATP-binding component of the Arp2/3 complex, a multiprotein complex that mediates actin polymerization upon stimulation by nucleation-promoting factor (NPF). The Arp2/3 complex mediates the formation of branched actin networks in the cytoplasm, providing the force for cell motility. Seems to contact the pointed end of the daughter actin filament. In addition to its role in the cytoplasmic cytoskeleton, the Arp2/3 complex also promotes actin polymerization in the nucleus, thereby regulating gene transcription and repair of damaged DNA. The Arp2/3 complex promotes homologous recombination (HR) repair in response to DNA damage by promoting nuclear actin polymerization, leading to drive motility of double-strand breaks (DSBs). The chain is Actin-related protein 3-B (actr3-b) from Xenopus laevis (African clawed frog).